Here is a 483-residue protein sequence, read N- to C-terminus: Isocitrate dehydrogenase [NADP] (483 aa).

Thr74 contributes to the NADP(+) binding site. Residues Ser83, Asn85, Arg89, Arg99, and Arg121 each coordinate D-threo-isocitrate. Residue Asp232 coordinates Mg(2+). NADP(+) contacts are provided by residues His264–Ile270 and Asn277.

This sequence belongs to the isocitrate and isopropylmalate dehydrogenases family. As to quaternary structure, homodimer. Mg(2+) is required as a cofactor. It depends on Mn(2+) as a cofactor.

It catalyses the reaction D-threo-isocitrate + NADP(+) = 2-oxoglutarate + CO2 + NADPH. Functionally, catalyzes the oxidative decarboxylation of isocitrate to 2-oxoglutarate and carbon dioxide with the concomitant reduction of NADP(+). The sequence is that of Isocitrate dehydrogenase [NADP] (icd) from Rickettsia conorii (strain ATCC VR-613 / Malish 7).